Here is a 1143-residue protein sequence, read N- to C-terminus: DNA-directed RNA polymerase subunit beta (1143 aa).

This sequence belongs to the RNA polymerase beta chain family. In terms of assembly, in plastids the minimal PEP RNA polymerase catalytic core is composed of four subunits: alpha, beta, beta', and beta''. When a (nuclear-encoded) sigma factor is associated with the core the holoenzyme is formed, which can initiate transcription.

The protein resides in the plastid. Its subcellular location is the chloroplast. The catalysed reaction is RNA(n) + a ribonucleoside 5'-triphosphate = RNA(n+1) + diphosphate. In terms of biological role, DNA-dependent RNA polymerase catalyzes the transcription of DNA into RNA using the four ribonucleoside triphosphates as substrates. The chain is DNA-directed RNA polymerase subunit beta from Pyropia yezoensis (Susabi-nori).